The following is an 87-amino-acid chain: Small ribosomal subunit protein bS20 (87 aa).

The segment covering 1–11 (MANHKSALKRI) has biased composition (basic residues). Residues 1-23 (MANHKSALKRIKQTEKRTERNRH) are disordered.

It belongs to the bacterial ribosomal protein bS20 family.

Binds directly to 16S ribosomal RNA. In Geotalea daltonii (strain DSM 22248 / JCM 15807 / FRC-32) (Geobacter daltonii), this protein is Small ribosomal subunit protein bS20.